The primary structure comprises 149 residues: Large ribosomal subunit protein bL9 (149 aa).

The protein belongs to the bacterial ribosomal protein bL9 family.

Functionally, binds to the 23S rRNA. The polypeptide is Large ribosomal subunit protein bL9 (Enterobacter sp. (strain 638)).